Consider the following 690-residue polypeptide: DNA ligase (690 aa).

NAD(+)-binding positions include 36–40, 85–86, and Glu-124; these read DSVYD and SL. Residue Lys-126 is the N6-AMP-lysine intermediate of the active site. Residues Arg-147, Glu-184, Lys-308, and Lys-332 each coordinate NAD(+). Cys-426, Cys-429, Cys-444, and Cys-449 together coordinate Zn(2+). Residues 614–690 form the BRCT domain; sequence NQSNVFDGKS…INENELKLLL (77 aa).

Belongs to the NAD-dependent DNA ligase family. LigA subfamily. It depends on Mg(2+) as a cofactor. Requires Mn(2+) as cofactor.

The enzyme catalyses NAD(+) + (deoxyribonucleotide)n-3'-hydroxyl + 5'-phospho-(deoxyribonucleotide)m = (deoxyribonucleotide)n+m + AMP + beta-nicotinamide D-nucleotide.. DNA ligase that catalyzes the formation of phosphodiester linkages between 5'-phosphoryl and 3'-hydroxyl groups in double-stranded DNA using NAD as a coenzyme and as the energy source for the reaction. It is essential for DNA replication and repair of damaged DNA. This is DNA ligase from Prochlorococcus marinus (strain NATL2A).